A 623-amino-acid chain; its full sequence is Sphingomyelinase C 2 (623 aa).

Residues 1–25 (MINKITKPKLLIGYYLLLFSLIRCL) form the signal peptide. Low complexity-rich tracts occupy residues 51–61 (VNSVSINNDPA) and 67–80 (NPAS…NAVP). The tract at residues 51–121 (VNSVSINNDP…DPNPANLASA (71 aa)) is disordered. A compositionally biased stretch (polar residues) spans 89–102 (NPVNPASANSNQVN). Positions 110-121 (PADPNPANLASA) are enriched in low complexity.

It is found in the secreted. The catalysed reaction is a sphingomyelin + H2O = phosphocholine + an N-acylsphing-4-enine + H(+). The sequence is that of Sphingomyelinase C 2 (sph2) from Leptospira interrogans serogroup Icterohaemorrhagiae serovar Lai (strain 56601).